We begin with the raw amino-acid sequence, 234 residues long: Ubiquitin thioesterase OTUB2 (234 aa).

The OTU domain maps to 40–231; sequence TAIRKTKGDG…TSHYNILYAA (192 aa). Asp48 is an active-site residue. Residue Cys51 is the Nucleophile of the active site. His224 is an active-site residue.

This sequence belongs to the peptidase C65 family. Widely expressed. Expressed at higher level in brain.

The enzyme catalyses Thiol-dependent hydrolysis of ester, thioester, amide, peptide and isopeptide bonds formed by the C-terminal Gly of ubiquitin (a 76-residue protein attached to proteins as an intracellular targeting signal).. Hydrolase that can remove conjugated ubiquitin from proteins in vitro and may therefore play an important regulatory role at the level of protein turnover by preventing degradation. Mediates deubiquitination of 'Lys-11'-,'Lys-48'- and 'Lys-63'-linked polyubiquitin chains, with a preference for 'Lys-63'-linked polyubiquitin chains. This is Ubiquitin thioesterase OTUB2 (OTUB2) from Homo sapiens (Human).